Reading from the N-terminus, the 140-residue chain is Nucleoside diphosphate kinase (140 aa).

ATP is bound by residues lysine 11, phenylalanine 59, arginine 87, threonine 93, arginine 104, and asparagine 114. Histidine 117 functions as the Pros-phosphohistidine intermediate in the catalytic mechanism.

The protein belongs to the NDK family. As to quaternary structure, homotetramer. The cofactor is Mg(2+).

It is found in the cytoplasm. It carries out the reaction a 2'-deoxyribonucleoside 5'-diphosphate + ATP = a 2'-deoxyribonucleoside 5'-triphosphate + ADP. It catalyses the reaction a ribonucleoside 5'-diphosphate + ATP = a ribonucleoside 5'-triphosphate + ADP. Its function is as follows. Major role in the synthesis of nucleoside triphosphates other than ATP. The ATP gamma phosphate is transferred to the NDP beta phosphate via a ping-pong mechanism, using a phosphorylated active-site intermediate. In Brucella canis (strain ATCC 23365 / NCTC 10854 / RM-666), this protein is Nucleoside diphosphate kinase.